A 339-amino-acid polypeptide reads, in one-letter code: MGRHILKHVFAVGGIYCSFLTWGLLQEPLNTRVWPNSGCTFQVPYIVALVQATIAMICGLIYIKWQKPVLSLSKFWTSHTRDMAIISLSQAISAPLAAYSLSYVDFLTYMLAKSCKLLPVLMVHLIVYRTPIPRSKKLVVLLVTVGITIFTLDGHKPSMTENDVSESSSSSSLIGFVLLGSSLFLDGLTNAKQDKLFQKATYKITGAHLMFALNFFLIVWNVIYMVLVDRQQLAKGLKMLHADPEISRYLLAYACCGAIGQCFIFYTLEQYGSLVLVMVTVTRKMFSMILSIIVYGHQVTLWQWVGIVIVFTGVVCESMGKKNKAKEGNIINEEKVKQS.

9 helical membrane-spanning segments follow: residues 5 to 25, 43 to 63, 91 to 111, 138 to 158, 171 to 191, 208 to 228, 246 to 268, 273 to 295, and 301 to 321; these read ILKH…WGLL, VPYI…LIYI, AISA…TYML, LVVL…HKPS, SSLI…LTNA, HLMF…MVLV, ISRY…FYTL, SLVL…IIVY, and LWQW…SMGK.

This sequence belongs to the nucleotide-sugar transporter family. SLC35B subfamily.

The protein resides in the endoplasmic reticulum membrane. In terms of biological role, may be involved in specific transport of UDP-Gal from the cytosol to the Golgi lumen. Involved in the maintenance of optimal conditions for the folding of secretory pathway proteins in the endoplasmic reticulum. The sequence is that of UDP-galactose transporter homolog 1 (HUT1) from Kluyveromyces lactis (strain ATCC 8585 / CBS 2359 / DSM 70799 / NBRC 1267 / NRRL Y-1140 / WM37) (Yeast).